A 479-amino-acid chain; its full sequence is ATP synthase subunit beta (479 aa).

Position 162 to 169 (162 to 169 (GGAGVGKT)) interacts with ATP.

The protein belongs to the ATPase alpha/beta chains family. F-type ATPases have 2 components, CF(1) - the catalytic core - and CF(0) - the membrane proton channel. CF(1) has five subunits: alpha(3), beta(3), gamma(1), delta(1), epsilon(1). CF(0) has three main subunits: a(1), b(2) and c(9-12). The alpha and beta chains form an alternating ring which encloses part of the gamma chain. CF(1) is attached to CF(0) by a central stalk formed by the gamma and epsilon chains, while a peripheral stalk is formed by the delta and b chains.

Its subcellular location is the cell membrane. It carries out the reaction ATP + H2O + 4 H(+)(in) = ADP + phosphate + 5 H(+)(out). In terms of biological role, produces ATP from ADP in the presence of a proton gradient across the membrane. The catalytic sites are hosted primarily by the beta subunits. This Mesoplasma florum (strain ATCC 33453 / NBRC 100688 / NCTC 11704 / L1) (Acholeplasma florum) protein is ATP synthase subunit beta.